A 106-amino-acid polypeptide reads, in one-letter code: Biogenesis of lysosome-related organelles complex 1 subunit 4 (106 aa).

Positions 53-106 form a coiled coil; it reads THSEGLSEQLKMTEKNILEMENLFDQIDQLCLFVQKAKSDLDKLEKLYNVVDRQ.

It belongs to the BLOC1S4 family. Component of the biogenesis of lysosome-related organelles complex-1 (BLOC-1) composed at least of blos-1, blos-2, blos-4, dsbn-1, glo-2, mutd-1 and snpn-1. Interacts with glo-2.

In terms of biological role, component of the biogenesis of lysosome-related organelles complex-1 (BLOC-1) involved in gut granule biogenesis. This is Biogenesis of lysosome-related organelles complex 1 subunit 4 (blos-4) from Caenorhabditis elegans.